We begin with the raw amino-acid sequence, 956 residues long: Bifunctional glutamine synthetase adenylyltransferase/adenylyl-removing enzyme (956 aa).

Residues 1-441 form an adenylyl removase region; it reads MLPLSTPLLA…IFTQLIGDDS (441 aa). Positions 450–956 are adenylyl transferase; sequence HVPFKSLWLE…RRSWQQWLGE (507 aa).

The protein belongs to the GlnE family. Requires Mg(2+) as cofactor.

It catalyses the reaction [glutamine synthetase]-O(4)-(5'-adenylyl)-L-tyrosine + phosphate = [glutamine synthetase]-L-tyrosine + ADP. The enzyme catalyses [glutamine synthetase]-L-tyrosine + ATP = [glutamine synthetase]-O(4)-(5'-adenylyl)-L-tyrosine + diphosphate. Its function is as follows. Involved in the regulation of glutamine synthetase GlnA, a key enzyme in the process to assimilate ammonia. When cellular nitrogen levels are high, the C-terminal adenylyl transferase (AT) inactivates GlnA by covalent transfer of an adenylyl group from ATP to specific tyrosine residue of GlnA, thus reducing its activity. Conversely, when nitrogen levels are low, the N-terminal adenylyl removase (AR) activates GlnA by removing the adenylyl group by phosphorolysis, increasing its activity. The regulatory region of GlnE binds the signal transduction protein PII (GlnB) which indicates the nitrogen status of the cell. The chain is Bifunctional glutamine synthetase adenylyltransferase/adenylyl-removing enzyme from Photorhabdus laumondii subsp. laumondii (strain DSM 15139 / CIP 105565 / TT01) (Photorhabdus luminescens subsp. laumondii).